The sequence spans 157 residues: Peptide methionine sulfoxide reductase MsrA (157 aa).

Cys10 is a catalytic residue.

It belongs to the MsrA Met sulfoxide reductase family.

The enzyme catalyses L-methionyl-[protein] + [thioredoxin]-disulfide + H2O = L-methionyl-(S)-S-oxide-[protein] + [thioredoxin]-dithiol. The catalysed reaction is [thioredoxin]-disulfide + L-methionine + H2O = L-methionine (S)-S-oxide + [thioredoxin]-dithiol. Functionally, has an important function as a repair enzyme for proteins that have been inactivated by oxidation. Catalyzes the reversible oxidation-reduction of methionine sulfoxide in proteins to methionine. This chain is Peptide methionine sulfoxide reductase MsrA, found in Clostridium botulinum (strain Loch Maree / Type A3).